Consider the following 573-residue polypeptide: Sulfate adenylyltransferase (573 aa).

The segment at 1–169 (MANSPHGGVL…IEAVNKLNHY (169 aa)) is N-terminal. Positions 170 to 394 (DYVALRYTPA…LRESSPPRHT (225 aa)) are catalytic. Residue Gln197 coordinates sulfate. ATP contacts are provided by residues 197-200 (QTRN) and 291-294 (GRDH). Catalysis depends on residues Thr198, Arg199, and Asn200. Arg199 serves as a coordination point for sulfate. Residue Ala295 participates in sulfate binding. ATP is bound at residue Val333. Residues 395–573 (QGFTVFLTGY…LETEGFFDRA (179 aa)) form an allosteric regulation domain; adenylyl-sulfate kinase-like region. 3'-phosphoadenylyl sulfate-binding positions include 434–437 (DTVR), Arg451, 477–478 (IA), and Arg515.

The protein in the N-terminal section; belongs to the sulfate adenylyltransferase family. It in the C-terminal section; belongs to the APS kinase family. In terms of assembly, homohexamer. Dimer of trimers.

It is found in the cytoplasm. It catalyses the reaction sulfate + ATP + H(+) = adenosine 5'-phosphosulfate + diphosphate. It participates in sulfur metabolism; hydrogen sulfide biosynthesis; sulfite from sulfate: step 1/3. Allosterically inhibited by 3'-phosphoadenosine 5'-phosphosulfate (PAPS). In terms of biological role, catalyzes the first intracellular reaction of sulfate assimilation, forming adenosine-5'-phosphosulfate (APS) from inorganic sulfate and ATP. Plays an important role in sulfate activation as a component of the biosynthesis pathway of sulfur-containing amino acids. This Aspergillus oryzae (strain ATCC 42149 / RIB 40) (Yellow koji mold) protein is Sulfate adenylyltransferase.